The chain runs to 404 residues: Triose phosphate/phosphate translocator, chloroplastic (404 aa).

The N-terminal 74 residues, 1-74 (MESRVLSRTT…GPVCSRREKT (74 aa)), are a transit peptide targeting the chloroplast. Residues 75–98 (AVQPCRAASGSSGEAKTGFLEKYP) are Chloroplast intermembrane-facing. A helical transmembrane segment spans residues 99–119 (ALVTGSFFFMWYFLNVIFNIL). The Lumenal segment spans residues 120–131 (NKKIYNYFPYPY). Residues 132 to 152 (FVSVIHLFVGVVYCLASWSVG) form a helical membrane-spanning segment. Residues 153-209 (LPKRAPMDSKLLKLLIPVAVCHAIGHVTSNVSFAAVAVSFTHTIKALEPFFNAAASQ) are Chloroplast intermembrane-facing. The chain crosses the membrane as a helical span at residues 210-230 (FVLGQSIPITLWLSLAPVVIG). Over 231 to 274 (VSMASLTELSFNWLGFISAMISNVSFTYRSLYSKKAMTDMDSTN) the chain is Lumenal. Residues 275-294 (IYAYISIIALFVCLPPAIIV) traverse the membrane as a helical segment. Topologically, residues 295-372 (EGPQLMKHGF…IAFGNKISTQ (78 aa)) are chloroplast intermembrane. The helical transmembrane segment at 373 to 393 (TAIGTSIAIAGVALYSLIKAK) threads the bilayer. The Lumenal portion of the chain corresponds to 394–404 (MEEEKRQMKST).

This sequence belongs to the TPT transporter family. TPT (TC 2.A.7.9) subfamily. The N-terminus is blocked.

Its subcellular location is the plastid. It is found in the chloroplast membrane. In terms of biological role, mediates the export of fixed carbons from the chloroplasts into the cytosol in the form of triose phosphates. This Spinacia oleracea (Spinach) protein is Triose phosphate/phosphate translocator, chloroplastic.